Reading from the N-terminus, the 168-residue chain is Sec-independent protein translocase protein TatB (168 aa).

The helical transmembrane segment at 1–21 (MIDLGISKLALIGAVALIVIG) threads the bilayer. Disordered stretches follow at residues 92–132 (FDGS…QGAR) and 146–168 (VQSG…SFFE). Over residues 94-107 (GSASSSSSSDTGSG) the composition is skewed to low complexity. Residues 117–126 (KSHNGRKSWR) show a composition bias toward basic residues.

It belongs to the TatB family. In terms of assembly, the Tat system comprises two distinct complexes: a TatABC complex, containing multiple copies of TatA, TatB and TatC subunits, and a separate TatA complex, containing only TatA subunits. Substrates initially bind to the TatABC complex, which probably triggers association of the separate TatA complex to form the active translocon.

The protein resides in the cell inner membrane. Its function is as follows. Part of the twin-arginine translocation (Tat) system that transports large folded proteins containing a characteristic twin-arginine motif in their signal peptide across membranes. Together with TatC, TatB is part of a receptor directly interacting with Tat signal peptides. TatB may form an oligomeric binding site that transiently accommodates folded Tat precursor proteins before their translocation. In Cupriavidus metallidurans (strain ATCC 43123 / DSM 2839 / NBRC 102507 / CH34) (Ralstonia metallidurans), this protein is Sec-independent protein translocase protein TatB.